Consider the following 222-residue polypeptide: 2-amino-5-formylamino-6-ribosylaminopyrimidin-4(3H)-one 5'-monophosphate deformylase (222 aa).

Glu29, His31, Asp40, and His108 together coordinate Fe cation.

This sequence belongs to the creatininase superfamily. FAPy deformylase family. Homodimer. Fe(2+) serves as cofactor. Zn(2+) is required as a cofactor.

The enzyme catalyses 2-amino-5-formylamino-6-(5-phospho-D-ribosylamino)pyrimidin-4(3H)-one + H2O = 2,5-diamino-6-(1-D-ribosylamino)pyrimidin-4(3H)-one 5'-phosphate + formate + H(+). It functions in the pathway cofactor biosynthesis; coenzyme F420 biosynthesis. Its pathway is cofactor biosynthesis; riboflavin biosynthesis. Functionally, catalyzes the hydrolysis of the formamide of 2-amino-5-formylamino-6-ribosylamino-4(3H)-pyrimidinone 5'-monophosphate (FAPy) to form 2,5-diamino-6-ribosylamino-4(3H)-pyrimidinone 5'-phosphate (APy). The sequence is that of 2-amino-5-formylamino-6-ribosylaminopyrimidin-4(3H)-one 5'-monophosphate deformylase from Methanocaldococcus infernus (strain DSM 11812 / JCM 15783 / ME).